We begin with the raw amino-acid sequence, 364 residues long: DNA replication and repair protein RecF (364 aa).

30–37 lines the ATP pocket; sequence GNNAQGKT.

Belongs to the RecF family.

Its subcellular location is the cytoplasm. Its function is as follows. The RecF protein is involved in DNA metabolism; it is required for DNA replication and normal SOS inducibility. RecF binds preferentially to single-stranded, linear DNA. It also seems to bind ATP. This chain is DNA replication and repair protein RecF, found in Clostridium botulinum (strain Loch Maree / Type A3).